The chain runs to 126 residues: Large ribosomal subunit protein bL17 (126 aa).

Belongs to the bacterial ribosomal protein bL17 family. In terms of assembly, part of the 50S ribosomal subunit. Contacts protein L32.

This is Large ribosomal subunit protein bL17 from Xylella fastidiosa (strain Temecula1 / ATCC 700964).